The chain runs to 366 residues: Sodium-potassium/proton antiporter ChaA (366 aa).

The Cytoplasmic portion of the chain corresponds to 1–16; the sequence is MSNAQEAVKTRHKETS. Helical transmembrane passes span 17 to 37 and 38 to 58; these read LIFP…QTLP and VVIA…FSVV. The Cytoplasmic portion of the chain corresponds to 59-74; that stretch reads RHADVLAHRLGEPYGS. The helical transmembrane segment at 75–95 threads the bilayer; that stretch reads LILSLSVVILEVSLISALMAT. Topologically, residues 96–106 are periplasmic; that stretch reads GDAAPTLMRDT. Residues 107 to 127 traverse the membrane as a helical segment; sequence LYSIIMIVTGGLVGFSLLLGG. The Cytoplasmic portion of the chain corresponds to 128 to 143; it reads RKFATQYMNLFGIKQY. Residues 144–164 traverse the membrane as a helical segment; the sequence is LIALFPLAIIVLVFPMALPAA. The Periplasmic segment spans residues 165-167; that stretch reads NFS. The chain crosses the membrane as a helical span at residues 168–188; that stretch reads TGQALLVALISAAMYGVFLLI. At 189–216 the chain is on the cytoplasmic side; that stretch reads QTKTHQSLFVYEHEDDSDDDDPHHGKPS. A helical transmembrane segment spans residues 217–237; that stretch reads AHSSLWHAIWLIIHLIAVIAV. The Periplasmic segment spans residues 238–255; the sequence is TKMNASSLETLLDSMNAP. Residues 256–276 form a helical membrane-spanning segment; sequence VAFTGFLVALLILSPEGLGAL. The Cytoplasmic portion of the chain corresponds to 277 to 290; the sequence is KAVLNNQVQRAMNL. A helical transmembrane segment spans residues 291 to 311; the sequence is FFGSVLATISLTVPVVTLIAF. At 312–318 the chain is on the periplasmic side; it reads MTGNELQ. Residues 319-339 traverse the membrane as a helical segment; sequence FALGAPEMVVMVASLVLCHIS. Over 340–345 the chain is Cytoplasmic; that stretch reads FSTGRT. Residues 346–366 traverse the membrane as a helical segment; sequence NVLNGAAHLALFAAYLMTIFA.

Belongs to the Ca(2+):cation antiporter (CaCA) (TC 2.A.19) family.

The protein resides in the cell inner membrane. It carries out the reaction Na(+)(in) + H(+)(out) = Na(+)(out) + H(+)(in). It catalyses the reaction K(+)(in) + H(+)(out) = K(+)(out) + H(+)(in). The catalysed reaction is Ca(2+)(in) + H(+)(out) = Ca(2+)(out) + H(+)(in). With respect to regulation, pronounced pH dependence with sodium as substrate. Ca(2+)/H(+) and Na(+)/H(+) antiporter activities are both inhibited by magnesium. Ca(2+)/H(+) activity is inhibited by the proton ionophore carbonyl cyanide m-chlorophenylhydrazone (CCCP). Its function is as follows. Sodium exporter that functions mainly at alkaline pH. Can also function as a potassium/proton and calcium/proton antiporter at alkaline pH. Does not play a major role in calcium export. The K(+)/H(+) antiporter activity may enable E.coli to adapt to K(+) salinity stress and to maintain K(+) homeostasis. This is Sodium-potassium/proton antiporter ChaA from Escherichia coli (strain K12).